A 243-amino-acid polypeptide reads, in one-letter code: 1-(5-phosphoribosyl)-5-[(5-phosphoribosylamino)methylideneamino] imidazole-4-carboxamide isomerase (243 aa).

Residue Asp-8 is the Proton acceptor of the active site. The Proton donor role is filled by Asp-130.

It belongs to the HisA/HisF family.

The protein resides in the cytoplasm. The enzyme catalyses 1-(5-phospho-beta-D-ribosyl)-5-[(5-phospho-beta-D-ribosylamino)methylideneamino]imidazole-4-carboxamide = 5-[(5-phospho-1-deoxy-D-ribulos-1-ylimino)methylamino]-1-(5-phospho-beta-D-ribosyl)imidazole-4-carboxamide. The protein operates within amino-acid biosynthesis; L-histidine biosynthesis; L-histidine from 5-phospho-alpha-D-ribose 1-diphosphate: step 4/9. The sequence is that of 1-(5-phosphoribosyl)-5-[(5-phosphoribosylamino)methylideneamino] imidazole-4-carboxamide isomerase from Saccharophagus degradans (strain 2-40 / ATCC 43961 / DSM 17024).